Here is a 592-residue protein sequence, read N- to C-terminus: Sodium- and chloride-dependent transporter XTRP3 (592 aa).

Residues 1 to 5 (MEKAR) lie on the Cytoplasmic side of the membrane. Residues 6-26 (PLWANSLQFVFACISYAVGLG) form a helical membrane-spanning segment. The Extracellular portion of the chain corresponds to 27-42 (NVWRFPYLCQMYGGGS). The helical transmembrane segment at 43-63 (FLVPYIIMLIVEGMPLLYLEL) threads the bilayer. At 64–79 (AVGQRMRQGSIGAWRT) the chain is on the cytoplasmic side. Residues 80 to 100 (ISPYLSGVGVASVVVSFFLSM) form a helical membrane-spanning segment. Residues 101-165 (YYNVINAWAF…ISPSLQENGG (65 aa)) lie on the Extracellular side of the membrane. The N-linked (GlcNAc...) asparagine glycan is linked to asparagine 131. A helical membrane pass occupies residues 166 to 186 (VQWEPALCLLLAWLVVYLCIL). The Cytoplasmic portion of the chain corresponds to 187–194 (RGTESTGK). A helical transmembrane segment spans residues 195-215 (VVYFTASLPYCVLIIYLIRGL). Topologically, residues 216 to 241 (TLHGATNGLMYMFTPKIEQLANPKAW) are extracellular. The chain crosses the membrane as a helical span at residues 242-262 (INAATQIFFSLGLGFGSLIAF). At 263–276 (ASYNEPSNNCQKHA) the chain is on the cytoplasmic side. The chain crosses the membrane as a helical span at residues 277–297 (IIVSLINSFTSIFASIVTFSI). Residues 298–389 (YGFKATFNYE…EAIKNMEVSQ (92 aa)) lie on the Extracellular side of the membrane. Residue asparagine 357 is glycosylated (N-linked (GlcNAc...) asparagine). Residues 390 to 410 (LWSVLYFFMLLMLGIGSMLGN) form a helical membrane-spanning segment. The Cytoplasmic portion of the chain corresponds to 411–431 (TAAILTPLTDSKIISSHLPKE). The chain crosses the membrane as a helical span at residues 432–452 (AISGLVCLVNCAIGMVFTMEA). Over 453-465 (GNYWFDIFNDYAA) the chain is Extracellular. Residues 466–486 (TLSLLLIVLVETIAVCYVYGL) form a helical membrane-spanning segment. Residues 487 to 504 (RRFESDLKAMTGRAVSWY) are Cytoplasmic-facing. A helical membrane pass occupies residues 505–525 (WKVMWAGVSPLLIVSLFVFYL). Topologically, residues 526-554 (SDYILTGTLKYQAWDASQGQLVTKDYPAY) are extracellular. Residues 555–575 (ALAVIGLLVASSTMCIPLAAL) traverse the membrane as a helical segment. The Cytoplasmic segment spans residues 576 to 592 (GTFVQRRLKRGDADPVA).

The protein belongs to the sodium:neurotransmitter symporter (SNF) (TC 2.A.22) family. SLC6A20 subfamily. In terms of tissue distribution, kidney and small intestine. Expressed in the S3 segment of the proximal tubule. Expressed in neurons.

The protein resides in the apical cell membrane. It catalyses the reaction L-proline(out) + chloride(out) + 2 Na(+)(out) = L-proline(in) + chloride(in) + 2 Na(+)(in). It carries out the reaction L-pipecolate(out) + chloride(out) + 2 Na(+)(out) = L-pipecolate(in) + chloride(in) + 2 Na(+)(in). The enzyme catalyses sarcosine(out) + chloride(out) + 2 Na(+)(out) = sarcosine(in) + chloride(in) + 2 Na(+)(in). The catalysed reaction is N-methyl-L-proline(out) + chloride(out) + 2 Na(+)(out) = N-methyl-L-proline(in) + chloride(in) + 2 Na(+)(in). It catalyses the reaction 2-methyl-2-(methylamino)propanoate(out) + chloride(out) + 2 Na(+)(out) = 2-methyl-2-(methylamino)propanoate(in) + chloride(in) + 2 Na(+)(in). It carries out the reaction glycine betaine(out) + chloride(out) + 2 Na(+)(out) = glycine betaine(in) + chloride(in) + 2 Na(+)(in). The enzyme catalyses glycine(out) + chloride(out) + 2 Na(+)(out) = glycine(in) + chloride(in) + 2 Na(+)(in). In terms of biological role, mediates the Na(+)- and Cl(-)-dependent uptake of imino acids such as L-proline, N-methyl-L-proline and pipecolate as well as N-methylated amino acids. Also transports glycine, regulates proline and glycine homeostasis in the brain playing a role in the modulation of NMDAR currents. This Homo sapiens (Human) protein is Sodium- and chloride-dependent transporter XTRP3.